The primary structure comprises 225 residues: 2-amino-5-formylamino-6-ribosylaminopyrimidin-4(3H)-one 5'-monophosphate deformylase (225 aa).

Positions 28, 30, 39, and 107 each coordinate Fe cation.

The protein belongs to the creatininase superfamily. FAPy deformylase family. In terms of assembly, homodimer. It depends on Fe(2+) as a cofactor. Zn(2+) serves as cofactor.

The catalysed reaction is 2-amino-5-formylamino-6-(5-phospho-D-ribosylamino)pyrimidin-4(3H)-one + H2O = 2,5-diamino-6-(1-D-ribosylamino)pyrimidin-4(3H)-one 5'-phosphate + formate + H(+). It functions in the pathway cofactor biosynthesis; coenzyme F420 biosynthesis. It participates in cofactor biosynthesis; riboflavin biosynthesis. Catalyzes the hydrolysis of the formamide of 2-amino-5-formylamino-6-ribosylamino-4(3H)-pyrimidinone 5'-monophosphate (FAPy) to form 2,5-diamino-6-ribosylamino-4(3H)-pyrimidinone 5'-phosphate (APy). This chain is 2-amino-5-formylamino-6-ribosylaminopyrimidin-4(3H)-one 5'-monophosphate deformylase, found in Methanocaldococcus sp. (strain FS406-22).